We begin with the raw amino-acid sequence, 186 residues long: MSPLPLRDPSHQANAGPRLVEPSCGPGVSLSNRTLCHPSWPMYDNWGRSPTTSERPEEEQVVSKDTGVPVRNYEDVFLLDPLLPCGQRVPLILTKPPQQAMDSRKLLLPPPIMSPSVHPSSSQACSSTWLSEAEMIALAGLLQMSQGEQTPNCVASSLPSTSCPDPVSVSEDPGPSGDQSCSGTDT.

Disordered regions lie at residues 1–25 and 148–186; these read MSPL…PSCG and EQTP…GTDT. Polar residues-rich tracts occupy residues 148 to 163 and 177 to 186; these read EQTP…STSC and GDQSCSGTDT.

May be a component of the mSIN3A corepressor complex. Interacts with SIN3A and HDAC2. In terms of tissue distribution, widely expressed.

The protein resides in the nucleus. Its subcellular location is the cytoplasm. In terms of biological role, involved in the transcriptional repression mediated by the mSIN3A but not the N-CoR corepressor complex. This chain is Histone deacetylase complex subunit SAP25 (Sap25), found in Mus musculus (Mouse).